A 389-amino-acid polypeptide reads, in one-letter code: Flagellar P-ring protein (389 aa).

The N-terminal stretch at 1-33 (MRPLVAARRRAAACCALAACMLALAFAPAAARA) is a signal peptide.

Belongs to the FlgI family. In terms of assembly, the basal body constitutes a major portion of the flagellar organelle and consists of four rings (L,P,S, and M) mounted on a central rod.

The protein localises to the periplasm. The protein resides in the bacterial flagellum basal body. Assembles around the rod to form the L-ring and probably protects the motor/basal body from shearing forces during rotation. The sequence is that of Flagellar P-ring protein from Burkholderia pseudomallei (strain K96243).